The chain runs to 425 residues: Enolase (425 aa).

Position 162 (glutamine 162) interacts with (2R)-2-phosphoglycerate. The Proton donor role is filled by glutamate 204. Mg(2+)-binding residues include aspartate 241, glutamate 284, and aspartate 311. (2R)-2-phosphoglycerate contacts are provided by lysine 336, arginine 365, serine 366, and lysine 387. Lysine 336 functions as the Proton acceptor in the catalytic mechanism.

Belongs to the enolase family. Requires Mg(2+) as cofactor.

It is found in the cytoplasm. It localises to the secreted. The protein localises to the cell surface. The catalysed reaction is (2R)-2-phosphoglycerate = phosphoenolpyruvate + H2O. It functions in the pathway carbohydrate degradation; glycolysis; pyruvate from D-glyceraldehyde 3-phosphate: step 4/5. Its function is as follows. Catalyzes the reversible conversion of 2-phosphoglycerate (2-PG) into phosphoenolpyruvate (PEP). It is essential for the degradation of carbohydrates via glycolysis. In Brucella abortus (strain S19), this protein is Enolase.